A 162-amino-acid polypeptide reads, in one-letter code: ATP synthase subunit b (162 aa).

A helical transmembrane segment spans residues 6–28 (LVTFVLTIVNILVLFYLLKRFLF).

Belongs to the ATPase B chain family. In terms of assembly, F-type ATPases have 2 components, F(1) - the catalytic core - and F(0) - the membrane proton channel. F(1) has five subunits: alpha(3), beta(3), gamma(1), delta(1), epsilon(1). F(0) has three main subunits: a(1), b(2) and c(10-14). The alpha and beta chains form an alternating ring which encloses part of the gamma chain. F(1) is attached to F(0) by a central stalk formed by the gamma and epsilon chains, while a peripheral stalk is formed by the delta and b chains.

Its subcellular location is the cell membrane. Functionally, f(1)F(0) ATP synthase produces ATP from ADP in the presence of a proton or sodium gradient. F-type ATPases consist of two structural domains, F(1) containing the extramembraneous catalytic core and F(0) containing the membrane proton channel, linked together by a central stalk and a peripheral stalk. During catalysis, ATP synthesis in the catalytic domain of F(1) is coupled via a rotary mechanism of the central stalk subunits to proton translocation. Its function is as follows. Component of the F(0) channel, it forms part of the peripheral stalk, linking F(1) to F(0). This is ATP synthase subunit b from Natranaerobius thermophilus (strain ATCC BAA-1301 / DSM 18059 / JW/NM-WN-LF).